The sequence spans 213 residues: MGCVSSKQFKRAAQHEDPAILAKETTFSVSEVEALFELFKKISHSIFRDGLIHKEEFQLALFRNSNKKNLFANRIFDLFDLKRNGVIDFGEFVRSLSIFHPETPLGDKIAFAFRLYDLRGTGCIEREELHEMVLALLNESDLFLSEEAVEQIVDQTFKQADLNDDGKIDPDEWKTFASKNPALLKNMTLPYLKDITMVFPSFILNSEVCEEEL.

Residue Gly2 is the site of N-myristoyl glycine attachment. 4 consecutive EF-hand domains span residues 31-66, 67-102, 104-139, and 148-183; these read EVEA…RNSN, KKNL…FHPE, PLGD…LLNE, and AVEQ…NPAL. Residues Asp161, Asn163, Asp165, Lys167, and Glu172 each coordinate Ca(2+).

It belongs to the calcineurin regulatory subunit family. In terms of assembly, homodimer. As to expression, expressed at low levels in roots, shoots, culms, leaves and young spikelets.

It is found in the cell membrane. In terms of biological role, acts as a calcium sensor. May function as positive regulator of salt stress responses. CBL proteins interact with CIPK serine-threonine protein kinases. Binding of a CBL protein to the regulatory NAF domain of a CIPK protein lead to the activation of the kinase in a calcium-dependent manner. This chain is Calcineurin B-like protein 8 (CBL8), found in Oryza sativa subsp. japonica (Rice).